Here is a 162-residue protein sequence, read N- to C-terminus: Selenoprotein F (162 aa).

Positions 1 to 28 (MAARRDGWLGPAFGLRLLLATVLQTVSA) are cleaved as a signal peptide. Position 93 (U93) is a non-standard amino acid, selenocysteine.

Belongs to the selenoprotein M/F family. As to quaternary structure, forms a tight complex with UGGT1/UGCGL1. Interacts with UGGT2/UGCGL2. Interacts with RDH11.

Its subcellular location is the endoplasmic reticulum lumen. Functionally, may be involved in redox reactions associated with the formation of disulfide bonds. May contribute to the quality control of protein folding in the endoplasmic reticulum. May regulate protein folding by enhancing the catalytic activity of UGGT1/UGCGL1 and UGGT2/UGCGL2. The polypeptide is Selenoprotein F (Bos taurus (Bovine)).